A 721-amino-acid polypeptide reads, in one-letter code: BBSome complex member bbs-7 (721 aa).

Part of BBSome complex, that contains at least bbs-1, bbs-2, bbs-4, bbs-5, osm-12, bbs-8/ttc-8 and bbs-9. Interacts with bbs-1. In terms of tissue distribution, expressed in ciliated cells including amphid and both inner and outer labial neurons of the head and in both phasmid neurons PHA and PHB in the tail at larval stages L1 and L2.

The protein localises to the cell projection. It is found in the cilium. The protein resides in the cytoplasm. Its subcellular location is the cytoskeleton. It localises to the cilium basal body. The protein localises to the cilium axoneme. In terms of biological role, component of the BBSome complex. The BBSome complex is thought to function as a coat complex required for sorting of specific membrane proteins to the primary cilia. The BBSome complex is required for ciliogenesis but is dispensable for centriolar satellite function. Required for proper BBSome complex assembly and its ciliary localization. Required for cilia biogenesis and both the assembly and movement of intraflagellar transport proteins along the ciliary axoneme. Plays a role in the removal of degraded mechanosensory receptors within the cilia. Plays a role in guanylyl cyclase localization in the ring-like structures at the base of the finger compartment in AFD sensory neurons. In ciliated sensory neurons, required for the sensation of nitric oxide and avoidance of NO-producing organisms like P.aeruginosa. This is BBSome complex member bbs-7 from Caenorhabditis elegans.